The primary structure comprises 115 residues: DNA-binding protein APE_1087b (115 aa).

Belongs to the PDCD5 family.

This is DNA-binding protein APE_1087b from Aeropyrum pernix (strain ATCC 700893 / DSM 11879 / JCM 9820 / NBRC 100138 / K1).